The sequence spans 67 residues: DNA-directed RNA polymerase subunit omega (67 aa).

This sequence belongs to the RNA polymerase subunit omega family. As to quaternary structure, the RNAP catalytic core consists of 2 alpha, 1 beta, 1 beta' and 1 omega subunit. When a sigma factor is associated with the core the holoenzyme is formed, which can initiate transcription.

The catalysed reaction is RNA(n) + a ribonucleoside 5'-triphosphate = RNA(n+1) + diphosphate. Promotes RNA polymerase assembly. Latches the N- and C-terminal regions of the beta' subunit thereby facilitating its interaction with the beta and alpha subunits. The protein is DNA-directed RNA polymerase subunit omega of Acidovorax ebreus (strain TPSY) (Diaphorobacter sp. (strain TPSY)).